We begin with the raw amino-acid sequence, 285 residues long: CCR4-NOT transcription complex subunit 7 (285 aa).

5 residues coordinate a divalent metal cation: aspartate 40, glutamate 42, aspartate 161, aspartate 230, and glutamate 278.

It belongs to the CAF1 family. In terms of assembly, component of the CCR4-NOT complex. It depends on Mn(2+) as a cofactor. Requires Mg(2+) as cofactor. Co(2+) serves as cofactor.

The protein resides in the nucleus. It is found in the cytoplasm. The enzyme catalyses Exonucleolytic cleavage of poly(A) to 5'-AMP.. Functionally, has 3'-5' poly(A) exoribonuclease activity for synthetic poly(A) RNA substrate. Catalytic component of the CCR4-NOT complex which is one of the major cellular mRNA deadenylases and is linked to various cellular processes including bulk mRNA degradation, miRNA-mediated repression, translational repression during translational initiation and general transcription regulation. During miRNA-mediated repression the complex also seems to act as translational repressor during translational initiation. Additional complex functions may be a consequence of its influence on mRNA expression. The protein is CCR4-NOT transcription complex subunit 7 (CNOT7) of Gallus gallus (Chicken).